The chain runs to 427 residues: Trigger factor (427 aa).

The PPIase FKBP-type domain occupies 163–248 (GDTVVIDFVG…IHEVKAKEVP (86 aa)).

This sequence belongs to the FKBP-type PPIase family. Tig subfamily.

It localises to the cytoplasm. It catalyses the reaction [protein]-peptidylproline (omega=180) = [protein]-peptidylproline (omega=0). In terms of biological role, involved in protein export. Acts as a chaperone by maintaining the newly synthesized protein in an open conformation. Functions as a peptidyl-prolyl cis-trans isomerase. The polypeptide is Trigger factor (Streptococcus mutans serotype c (strain ATCC 700610 / UA159)).